The following is a 143-amino-acid chain: Fido domain-containing protein DDB_G0283145 (143 aa).

The region spanning 1–128 (MKGIIVSDGV…TSHLALIILN (128 aa)) is the Fido domain. Residues 49-69 (SSPYAVAAWLLHAFVSIHPFI) form a helical membrane-spanning segment.

It is found in the membrane. The sequence is that of Fido domain-containing protein DDB_G0283145 from Dictyostelium discoideum (Social amoeba).